We begin with the raw amino-acid sequence, 275 residues long: Putative pyruvate, phosphate dikinase regulatory protein (275 aa).

Gly-149–Thr-156 provides a ligand contact to ADP.

The protein belongs to the pyruvate, phosphate/water dikinase regulatory protein family. PDRP subfamily.

It catalyses the reaction N(tele)-phospho-L-histidyl/L-threonyl-[pyruvate, phosphate dikinase] + ADP = N(tele)-phospho-L-histidyl/O-phospho-L-threonyl-[pyruvate, phosphate dikinase] + AMP + H(+). The enzyme catalyses N(tele)-phospho-L-histidyl/O-phospho-L-threonyl-[pyruvate, phosphate dikinase] + phosphate + H(+) = N(tele)-phospho-L-histidyl/L-threonyl-[pyruvate, phosphate dikinase] + diphosphate. Bifunctional serine/threonine kinase and phosphorylase involved in the regulation of the pyruvate, phosphate dikinase (PPDK) by catalyzing its phosphorylation/dephosphorylation. This is Putative pyruvate, phosphate dikinase regulatory protein from Levilactobacillus brevis (strain ATCC 367 / BCRC 12310 / CIP 105137 / JCM 1170 / LMG 11437 / NCIMB 947 / NCTC 947) (Lactobacillus brevis).